The chain runs to 901 residues: Protein translocase subunit SecA (901 aa).

ATP-binding positions include Q87, 105–109, and D512; that span reads GEGKT. C885, C887, C896, and H897 together coordinate Zn(2+).

Belongs to the SecA family. In terms of assembly, monomer and homodimer. Part of the essential Sec protein translocation apparatus which comprises SecA, SecYEG and auxiliary proteins SecDF-YajC and YidC. It depends on Zn(2+) as a cofactor.

It localises to the cell inner membrane. Its subcellular location is the cytoplasm. The enzyme catalyses ATP + H2O + cellular proteinSide 1 = ADP + phosphate + cellular proteinSide 2.. In terms of biological role, part of the Sec protein translocase complex. Interacts with the SecYEG preprotein conducting channel. Has a central role in coupling the hydrolysis of ATP to the transfer of proteins into and across the cell membrane, serving both as a receptor for the preprotein-SecB complex and as an ATP-driven molecular motor driving the stepwise translocation of polypeptide chains across the membrane. In Salmonella agona (strain SL483), this protein is Protein translocase subunit SecA.